A 157-amino-acid polypeptide reads, in one-letter code: 2-C-methyl-D-erythritol 2,4-cyclodiphosphate synthase (157 aa).

Aspartate 9 and histidine 11 together coordinate a divalent metal cation. 4-CDP-2-C-methyl-D-erythritol 2-phosphate-binding positions include 9–11 and 35–36; these read DVH and HS. Histidine 43 contacts a divalent metal cation. Residues 57–59, 62–66, 133–136, phenylalanine 140, and lysine 143 each bind 4-CDP-2-C-methyl-D-erythritol 2-phosphate; these read DIG, FPETD, and TTME.

Belongs to the IspF family. Homotrimer. It depends on a divalent metal cation as a cofactor.

It catalyses the reaction 4-CDP-2-C-methyl-D-erythritol 2-phosphate = 2-C-methyl-D-erythritol 2,4-cyclic diphosphate + CMP. The protein operates within isoprenoid biosynthesis; isopentenyl diphosphate biosynthesis via DXP pathway; isopentenyl diphosphate from 1-deoxy-D-xylulose 5-phosphate: step 4/6. In terms of biological role, involved in the biosynthesis of isopentenyl diphosphate (IPP) and dimethylallyl diphosphate (DMAPP), two major building blocks of isoprenoid compounds. Catalyzes the conversion of 4-diphosphocytidyl-2-C-methyl-D-erythritol 2-phosphate (CDP-ME2P) to 2-C-methyl-D-erythritol 2,4-cyclodiphosphate (ME-CPP) with a corresponding release of cytidine 5-monophosphate (CMP). The polypeptide is 2-C-methyl-D-erythritol 2,4-cyclodiphosphate synthase (Enterococcus faecalis (strain ATCC 700802 / V583)).